The following is a 400-amino-acid chain: MAP kinase-activated protein kinase 2 (400 aa).

Residues 1–43 (MLSNSQGQSPPVPFPAPAPPPQPPTPALPHPPAQPPPPPPQQF) are disordered. Phosphoserine is present on S9. Residues 10-42 (PPVPFPAPAPPPQPPTPALPHPPAQPPPPPPQQ) are compositionally biased toward pro residues. The residue at position 25 (T25) is a Phosphothreonine. Residues 64–325 (KVTSQVLGLG…ITEFMNHPWI (262 aa)) enclose the Protein kinase domain. Residues 70–78 (LGLGINGKV) and K93 each bind ATP. 139 to 141 (ECL) is a staurosporine binding site. D186 functions as the Proton acceptor in the catalytic mechanism. T222 carries the phosphothreonine; by MAPK14 modification. S272 is subject to Phosphoserine; by MAPK14. Residue S328 is modified to Phosphoserine; by autocatalysis. Residues 328 to 364 (STKVPQTPLHTSRVLKEDKERWEDVKEEMTSALATMR) form an autoinhibitory helix region. T334 carries the post-translational modification Phosphothreonine; by MAPK14. A Glycyl lysine isopeptide (Lys-Gly) (interchain with G-Cter in SUMO) cross-link involves residue K353. The Nuclear export signal (NES) motif lies at 356–365 (MTSALATMRV). The interval 366-390 (DYEQIKIKKIEDASNPLLLKRRKKA) is p38 MAPK-binding site. 2 consecutive short sequence motifs (bipartite nuclear localization signal) follow at residues 371–374 (KIKK) and 385–389 (KRRKK).

The protein belongs to the protein kinase superfamily. CAMK Ser/Thr protein kinase family. As to quaternary structure, heterodimer with p38-alpha/MAPK14; this heterodimer forms a stable complex: molecules are positioned 'face to face' so that the ATP-binding sites of both kinases are at the heterodimer interface. Interacts with PHC2. Interacts with HSF1. Post-translationally, sumoylation inhibits the protein kinase activity. Phosphorylated and activated by MAP kinase p38-alpha/MAPK14 at Thr-222, Ser-272 and Thr-334. In terms of tissue distribution, expressed in all tissues examined.

The protein resides in the cytoplasm. The protein localises to the nucleus. The catalysed reaction is L-seryl-[protein] + ATP = O-phospho-L-seryl-[protein] + ADP + H(+). It catalyses the reaction L-threonyl-[protein] + ATP = O-phospho-L-threonyl-[protein] + ADP + H(+). Its activity is regulated as follows. Activated following phosphorylation by p38-alpha/MAPK14 following various stresses. Inhibited following sumoylation. Specifically inhibited by pyrrolopyridine inhibitors. In terms of biological role, stress-activated serine/threonine-protein kinase involved in cytokine production, endocytosis, reorganization of the cytoskeleton, cell migration, cell cycle control, chromatin remodeling, DNA damage response and transcriptional regulation. Following stress, it is phosphorylated and activated by MAP kinase p38-alpha/MAPK14, leading to phosphorylation of substrates. Phosphorylates serine in the peptide sequence, Hyd-X-R-X(2)-S, where Hyd is a large hydrophobic residue. Phosphorylates ALOX5, CDC25B, CDC25C, CEP131, ELAVL1, HNRNPA0, HSP27/HSPB1, KRT18, KRT20, LIMK1, LSP1, PABPC1, PARN, PDE4A, RCSD1, RPS6KA3, TAB3 and TTP/ZFP36. Phosphorylates HSF1; leading to the interaction with HSP90 proteins and inhibiting HSF1 homotrimerization, DNA-binding and transactivation activities. Mediates phosphorylation of HSP27/HSPB1 in response to stress, leading to the dissociation of HSP27/HSPB1 from large small heat-shock protein (sHsps) oligomers and impairment of their chaperone activities and ability to protect against oxidative stress effectively. Involved in inflammatory response by regulating tumor necrosis factor (TNF) and IL6 production post-transcriptionally: acts by phosphorylating AU-rich elements (AREs)-binding proteins ELAVL1, HNRNPA0, PABPC1 and TTP/ZFP36, leading to the regulation of the stability and translation of TNF and IL6 mRNAs. Phosphorylation of TTP/ZFP36, a major post-transcriptional regulator of TNF, promotes its binding to 14-3-3 proteins and reduces its ARE mRNA affinity, leading to inhibition of dependent degradation of ARE-containing transcripts. Phosphorylates CEP131 in response to cellular stress induced by ultraviolet irradiation which promotes binding of CEP131 to 14-3-3 proteins and inhibits formation of novel centriolar satellites. Also involved in late G2/M checkpoint following DNA damage through a process of post-transcriptional mRNA stabilization: following DNA damage, relocalizes from nucleus to cytoplasm and phosphorylates HNRNPA0 and PARN, leading to stabilization of GADD45A mRNA. Involved in toll-like receptor signaling pathway (TLR) in dendritic cells: required for acute TLR-induced macropinocytosis by phosphorylating and activating RPS6KA3. The sequence is that of MAP kinase-activated protein kinase 2 (MAPKAPK2) from Homo sapiens (Human).